Here is a 104-residue protein sequence, read N- to C-terminus: U-scoloptoxin(10)-Cw1a (104 aa).

The signal sequence occupies residues 1-23 (MNKTVAVFFAVICVICVIKSCKT).

It belongs to the scoloptoxin-10 family. In terms of processing, contains 3 disulfide bonds. Expressed by the venom gland.

It is found in the secreted. The sequence is that of U-scoloptoxin(10)-Cw1a from Cormocephalus westwoodi (Westwood's green centipede).